The primary structure comprises 158 residues: SsrA-binding protein (158 aa).

It belongs to the SmpB family.

It localises to the cytoplasm. In terms of biological role, required for rescue of stalled ribosomes mediated by trans-translation. Binds to transfer-messenger RNA (tmRNA), required for stable association of tmRNA with ribosomes. tmRNA and SmpB together mimic tRNA shape, replacing the anticodon stem-loop with SmpB. tmRNA is encoded by the ssrA gene; the 2 termini fold to resemble tRNA(Ala) and it encodes a 'tag peptide', a short internal open reading frame. During trans-translation Ala-aminoacylated tmRNA acts like a tRNA, entering the A-site of stalled ribosomes, displacing the stalled mRNA. The ribosome then switches to translate the ORF on the tmRNA; the nascent peptide is terminated with the 'tag peptide' encoded by the tmRNA and targeted for degradation. The ribosome is freed to recommence translation, which seems to be the essential function of trans-translation. This is SsrA-binding protein from Bifidobacterium longum (strain DJO10A).